Here is a 232-residue protein sequence, read N- to C-terminus: Rho-related GTP-binding protein Rho6 (232 aa).

GTP-binding positions include 23–28 (QCGKTA), 38–45 (YPETYVPT), 67–71 (DTSGS), 125–128 (CKTD), and 169–170 (AF). The short motif at 42–50 (YVPTVFENY) is the Effector region element. C229 bears the Cysteine methyl ester mark. The S-geranylgeranyl cysteine moiety is linked to residue C229. Positions 230–232 (SIM) are cleaved as a propeptide — removed in mature form.

It belongs to the small GTPase superfamily. Rho family. In terms of assembly, binds GRB7 and PLXNB1. Interacts with PLXNA2. Interacts with UBXD5.

It is found in the cell membrane. It localises to the cytoplasm. The protein resides in the cytoskeleton. Its function is as follows. Lacks intrinsic GTPase activity. Has a low affinity for GDP, and constitutively binds GTP. Controls rearrangements of the actin cytoskeleton. Induces the Rac-dependent neuritic process formation in part by disruption of the cortical actin filaments. Causes the formation of many neuritic processes from the cell body with disruption of the cortical actin filaments. The protein is Rho-related GTP-binding protein Rho6 (RND1) of Bos taurus (Bovine).